Reading from the N-terminus, the 199-residue chain is Recombination protein RecR (199 aa).

The C4-type zinc-finger motif lies at 58–73 (CQRCFHLSSEDLCNIC). A Toprim domain is found at 81-175 (QTICVVADPR…RVTRIAFGLP (95 aa)).

This sequence belongs to the RecR family.

May play a role in DNA repair. It seems to be involved in an RecBC-independent recombinational process of DNA repair. It may act with RecF and RecO. In Synechococcus elongatus (strain ATCC 33912 / PCC 7942 / FACHB-805) (Anacystis nidulans R2), this protein is Recombination protein RecR.